The following is a 670-amino-acid chain: DNA ligase (670 aa).

NAD(+)-binding positions include 32–36 (DAYYD), 81–82 (SL), and E110. K112 acts as the N6-AMP-lysine intermediate in catalysis. NAD(+) contacts are provided by R133, E170, K289, and K313. Zn(2+) contacts are provided by C407, C410, C425, and C431. The 81-residue stretch at 590–670 (EDELRLKGQT…ELLVFLGLAG (81 aa)) folds into the BRCT domain.

It belongs to the NAD-dependent DNA ligase family. LigA subfamily. Mg(2+) serves as cofactor. It depends on Mn(2+) as a cofactor.

It catalyses the reaction NAD(+) + (deoxyribonucleotide)n-3'-hydroxyl + 5'-phospho-(deoxyribonucleotide)m = (deoxyribonucleotide)n+m + AMP + beta-nicotinamide D-nucleotide.. DNA ligase that catalyzes the formation of phosphodiester linkages between 5'-phosphoryl and 3'-hydroxyl groups in double-stranded DNA using NAD as a coenzyme and as the energy source for the reaction. It is essential for DNA replication and repair of damaged DNA. This is DNA ligase from Shewanella denitrificans (strain OS217 / ATCC BAA-1090 / DSM 15013).